A 342-amino-acid chain; its full sequence is MTDRYILAVESSCDETSVAILKNESTLLSNVIASQVESHKRFGGVVPEVASRHHVEVITTCFEDALQEAGISASDLSAVAVTYGPGLVGALLVGLAAAKAFAWANHLPLIPVNHMAGHLMAAREQKPLVYPLIALLVSGGHTELVYVPEPGDYHIIGETRDDAVGEAYDKVGRVMGLTYPAGREIDQLAHKGQDTYHFPRAMITEDHLEFSFSGLKSAFINLHHNAKQKGNELILEDLCASFQAAVLDILLAKTKKALSRYPAKMLVVAGGVAANQGLRDRLAQEITHIEVVIPKLRLCGDNAGMIALAAAIEYDKQHFANMSLNAKPSLAFDQFPDSFVIN.

Fe cation contacts are provided by H114 and H118. Residues 136–140 (LVSGG), D169, G182, D186, and N275 each bind substrate. D301 contacts Fe cation.

Belongs to the KAE1 / TsaD family. Fe(2+) serves as cofactor.

The protein localises to the cytoplasm. The catalysed reaction is L-threonylcarbamoyladenylate + adenosine(37) in tRNA = N(6)-L-threonylcarbamoyladenosine(37) in tRNA + AMP + H(+). In terms of biological role, required for the formation of a threonylcarbamoyl group on adenosine at position 37 (t(6)A37) in tRNAs that read codons beginning with adenine. Is involved in the transfer of the threonylcarbamoyl moiety of threonylcarbamoyl-AMP (TC-AMP) to the N6 group of A37, together with TsaE and TsaB. TsaD likely plays a direct catalytic role in this reaction. The protein is tRNA N6-adenosine threonylcarbamoyltransferase of Streptococcus pyogenes serotype M4 (strain MGAS10750).